The chain runs to 249 residues: Cilia- and flagella-associated protein 410 (249 aa).

LRR repeat units lie at residues 19 to 40 (NVRK…REMP), 41 to 62 (SLEV…RSCR), and 63 to 84 (RLSE…FYLK). Positions 97–137 (NPCCGTSPHLYRMTVLRNLPHLQKLDNQAVTEEELTRALME) constitute an LRRCT domain. Residues 146 to 203 (HREGAGNGCPKPPYALNSVSSATETSQHLLSYTEETEVQGQTTTDQSPSFSPRDTMRS) form a disordered region. Positions 162-175 (NSVSSATETSQHLL) are enriched in polar residues.

In terms of assembly, found in a complex with CFAP410, NEK1 and SPATA7. Interacts with NEK1. As to expression, expressed in the retina.

The protein localises to the cell projection. Its subcellular location is the cilium. It localises to the cytoplasm. It is found in the cytoskeleton. The protein resides in the cilium basal body. The protein localises to the mitochondrion. Its subcellular location is the photoreceptor outer segment. In terms of biological role, plays a role in cilia formation and/or maintenance. Plays a role in the regulation of cell morphology and cytoskeletal organization. Involved in DNA damage repair. The protein is Cilia- and flagella-associated protein 410 of Mus musculus (Mouse).